Reading from the N-terminus, the 272-residue chain is uncharacterized protein (272 aa).

The signal sequence occupies residues 1-20 (MKLRKIFLLPLISLSTLSVA). Residue Cys-21 is the site of N-palmitoyl cysteine attachment. Residue Cys-21 is the site of S-diacylglycerol cysteine attachment.

Belongs to the MG439/MG440 family.

The protein localises to the cell membrane. This is an uncharacterized protein from Mycoplasma genitalium (strain ATCC 33530 / DSM 19775 / NCTC 10195 / G37) (Mycoplasmoides genitalium).